The following is a 228-amino-acid chain: Somatolactin (228 aa).

A signal peptide spans 1 to 24 (MFSIRMNKVLQGFVCLMLTHRIVG). Intrachain disulfides connect cysteine 29–cysteine 38, cysteine 88–cysteine 200, and cysteine 217–cysteine 225. Asparagine 141 and asparagine 177 each carry an N-linked (GlcNAc...) asparagine glycan.

The protein belongs to the somatotropin/prolactin family.

It is found in the secreted. This Anguilla anguilla (European freshwater eel) protein is Somatolactin.